We begin with the raw amino-acid sequence, 350 residues long: Ion-translocating oxidoreductase complex subunit D (350 aa).

4 helical membrane-spanning segments follow: residues 37–57 (YYFG…AYLA), 78–109 (ALVT…IVIV), 124–144 (AMAA…SWVA), and 158–178 (TFNS…HLAI). At Thr185 the chain carries FMN phosphoryl threonine. Helical transmembrane passes span 212–232 (SVGE…LVML), 239–259 (WHIS…GFLI), 264–284 (FVSP…FFIA), 298–318 (LIFG…GGYP), and 319–339 (DAVA…DYYV).

Belongs to the NqrB/RnfD family. As to quaternary structure, the complex is composed of six subunits: RnfA, RnfB, RnfC, RnfD, RnfE and RnfG. Requires FMN as cofactor.

The protein resides in the cell inner membrane. In terms of biological role, part of a membrane-bound complex that couples electron transfer with translocation of ions across the membrane. The chain is Ion-translocating oxidoreductase complex subunit D from Shewanella frigidimarina (strain NCIMB 400).